The primary structure comprises 2290 residues: Armadillo repeat-containing X-linked protein 4 (2290 aa).

The chain crosses the membrane as a helical span at residues 7–24 (VGWVTAGLVIWAGTCYYI). 8 disordered regions span residues 517–549 (QGEA…TCTQ), 564–583 (SRVD…TKAD), 967–988 (KVRG…VGSA), 1014–1087 (AVPK…ACRK), 1302–1430 (GSWA…ANSG), 1521–1715 (GSWG…RSED), 1911–1931 (SNTF…AGDN), and 1954–1973 (NENT…KSSE). The segment covering 526-536 (GKARGKAKAKC) has biased composition (basic residues). A compositionally biased stretch (polar residues) spans 1073 to 1087 (TSESEGGSGTQACRK). Composition is skewed to gly residues over residues 1328-1341 (SWAG…GGSM) and 1403-1414 (AGAGGQAGGGSK). Positions 1419 to 1430 (DQSSGRSWANSG) are enriched in polar residues. Over residues 1521 to 1535 (GSWGGASGQDVGGSR) the composition is skewed to gly residues. Positions 1537–1558 (GPTNQSSAGSWDSPGSQVSGSC) are enriched in polar residues. 2 stretches are compositionally biased toward gly residues: residues 1581 to 1598 (IGGG…GGSR) and 1609 to 1623 (GSWG…GGAR). The span at 1628–1645 (DQSSGGSWAGTGNQSSGR) shows a compositional bias: polar residues. A compositionally biased stretch (low complexity) spans 1674-1687 (GAGSQASGESWAGS). ARM repeat units follow at residues 2031 to 2071 (RCKH…NSAD), 2073 to 2112 (SYSH…NISV), 2153 to 2192 (ITSE…NFSK), and 2194 to 2234 (PSMT…NINY).

It belongs to the eutherian X-chromosome-specific Armcx family.

Its subcellular location is the membrane. The polypeptide is Armadillo repeat-containing X-linked protein 4 (ARMCX4) (Homo sapiens (Human)).